Consider the following 847-residue polypeptide: DNA mismatch repair protein MutS (847 aa).

603–610 (GPNMSGKS) contacts ATP.

The protein belongs to the DNA mismatch repair MutS family.

Functionally, this protein is involved in the repair of mismatches in DNA. It is possible that it carries out the mismatch recognition step. This protein has a weak ATPase activity. The polypeptide is DNA mismatch repair protein MutS (Streptococcus suis (strain 98HAH33)).